A 443-amino-acid polypeptide reads, in one-letter code: MQVTPTLNEGLKRAFTVVVPSADLQARRDARLAEVAKTIKLPGFRPGKVPASLVKQRYGESVNAELLEEAVNDATAKLFEEQKIRPAMQPKIEVVSAIEDGKDLEFKVETEVLPEIEVPDLSGLKLTRLGAKVSEETVDKALNDVARRSRKFETIEEDRPAAKGDVLCVDFVGKLDGTPFDGGTADDVNVEIGGEGFIPGFAEQMEGMKAGEERVINVTFPADYQAEELAGKAVTFDIKAKSLKKAVDPAIDDELAKTIGFENLEQIRKIITEQAEGEYQQLSRLRIKRDLLDALSEKTDFEAPSSMVDAEFNQIWARVEEDRKVGRLDEEDAGKDEETLKADYRRIAERRVKLGLLLAEIGRKQEIQVSREELLGAMQQEARRYPGQEQMVFEFFSKNPQAVEGLRGPILENKVVDYLIELADVTDKEVTPEELAEIPPAEL.

The 86-residue stretch at 164–249 (GDVLCVDFVG…AKSLKKAVDP (86 aa)) folds into the PPIase FKBP-type domain.

The protein belongs to the FKBP-type PPIase family. Tig subfamily.

Its subcellular location is the cytoplasm. It carries out the reaction [protein]-peptidylproline (omega=180) = [protein]-peptidylproline (omega=0). In terms of biological role, involved in protein export. Acts as a chaperone by maintaining the newly synthesized protein in an open conformation. Functions as a peptidyl-prolyl cis-trans isomerase. The protein is Trigger factor of Gluconobacter oxydans (strain 621H) (Gluconobacter suboxydans).